The following is a 520-amino-acid chain: GMP synthase [glutamine-hydrolyzing] (520 aa).

A Glutamine amidotransferase type-1 domain is found at 9-202 (TVLIVDFGSQ…VHKIAGIKGD (194 aa)). The active-site Nucleophile is Cys86. Active-site residues include His176 and Glu178. Residues 203–395 (WTMSAYRAKA…LGLPESFIGR (193 aa)) form the GMPS ATP-PPase domain. ATP is bound at residue 230 to 236 (SGGVDSS).

As to quaternary structure, homodimer.

The enzyme catalyses XMP + L-glutamine + ATP + H2O = GMP + L-glutamate + AMP + diphosphate + 2 H(+). It participates in purine metabolism; GMP biosynthesis; GMP from XMP (L-Gln route): step 1/1. In terms of biological role, catalyzes the synthesis of GMP from XMP. This Sinorhizobium fredii (strain NBRC 101917 / NGR234) protein is GMP synthase [glutamine-hydrolyzing].